The chain runs to 124 residues: Acidic phospholipase A2 BA1 (124 aa).

7 cysteine pairs are disulfide-bonded: cysteine 26/cysteine 116, cysteine 28/cysteine 44, cysteine 43/cysteine 95, cysteine 49/cysteine 124, cysteine 50/cysteine 88, cysteine 57/cysteine 81, and cysteine 75/cysteine 86. Ca(2+) is bound by residues tyrosine 27, glycine 29, and glycine 31. Residue histidine 47 is part of the active site. Aspartate 48 lines the Ca(2+) pocket. Residue aspartate 89 is part of the active site.

This sequence belongs to the phospholipase A2 family. Group II subfamily. D49 sub-subfamily. Requires Ca(2+) as cofactor. As to expression, expressed by the venom gland.

It is found in the secreted. It catalyses the reaction a 1,2-diacyl-sn-glycero-3-phosphocholine + H2O = a 1-acyl-sn-glycero-3-phosphocholine + a fatty acid + H(+). In terms of biological role, PLA2 catalyzes the calcium-dependent hydrolysis of the 2-acyl groups in 3-sn-phosphoglycerides. The polypeptide is Acidic phospholipase A2 BA1 (Gloydius halys (Chinese water mocassin)).